Reading from the N-terminus, the 74-residue chain is Exodeoxyribonuclease 7 small subunit (74 aa).

The protein belongs to the XseB family. Heterooligomer composed of large and small subunits.

The protein localises to the cytoplasm. It carries out the reaction Exonucleolytic cleavage in either 5'- to 3'- or 3'- to 5'-direction to yield nucleoside 5'-phosphates.. Its function is as follows. Bidirectionally degrades single-stranded DNA into large acid-insoluble oligonucleotides, which are then degraded further into small acid-soluble oligonucleotides. The polypeptide is Exodeoxyribonuclease 7 small subunit (Thermotoga neapolitana (strain ATCC 49049 / DSM 4359 / NBRC 107923 / NS-E)).